We begin with the raw amino-acid sequence, 515 residues long: Cytochrome P450 1A2 (515 aa).

Ser-69 carries an O-linked (GlcNAc) serine glycan. A substrate-binding site is contributed by Phe-226. Cys-458 serves as a coordination point for heme.

This sequence belongs to the cytochrome P450 family. Interacts with PGRMC1; the interaction requires PGRMC1 homodimerization. The cofactor is heme.

Its subcellular location is the endoplasmic reticulum membrane. It is found in the microsome membrane. It carries out the reaction an organic molecule + reduced [NADPH--hemoprotein reductase] + O2 = an alcohol + oxidized [NADPH--hemoprotein reductase] + H2O + H(+). The catalysed reaction is 17beta-estradiol + reduced [NADPH--hemoprotein reductase] + O2 = 2-hydroxy-17beta-estradiol + oxidized [NADPH--hemoprotein reductase] + H2O + H(+). The enzyme catalyses 17beta-estradiol + reduced [NADPH--hemoprotein reductase] + O2 = 4-hydroxy-17beta-estradiol + oxidized [NADPH--hemoprotein reductase] + H2O + H(+). It catalyses the reaction estrone + reduced [NADPH--hemoprotein reductase] + O2 = 2-hydroxyestrone + oxidized [NADPH--hemoprotein reductase] + H2O + H(+). It carries out the reaction estrone + reduced [NADPH--hemoprotein reductase] + O2 = 4-hydroxyestrone + oxidized [NADPH--hemoprotein reductase] + H2O + H(+). The catalysed reaction is cholesterol + reduced [NADPH--hemoprotein reductase] + O2 = 25-hydroxycholesterol + oxidized [NADPH--hemoprotein reductase] + H2O + H(+). The enzyme catalyses all-trans-retinol + reduced [NADPH--hemoprotein reductase] + O2 = all-trans-retinal + oxidized [NADPH--hemoprotein reductase] + 2 H2O + H(+). It catalyses the reaction all-trans-retinal + reduced [NADPH--hemoprotein reductase] + O2 = all-trans-retinoate + oxidized [NADPH--hemoprotein reductase] + H2O + 2 H(+). It carries out the reaction (5Z,8Z,11Z,14Z)-eicosatetraenoate + reduced [NADPH--hemoprotein reductase] + O2 = (14R,15S)-epoxy-(5Z,8Z,11Z)-eicosatrienoate + oxidized [NADPH--hemoprotein reductase] + H2O + H(+). The catalysed reaction is (5Z,8Z,11Z,14Z)-eicosatetraenoate + reduced [NADPH--hemoprotein reductase] + O2 = (14S,15R)-epoxy-(5Z,8Z,11Z)-eicosatrienoate + oxidized [NADPH--hemoprotein reductase] + H2O + H(+). The enzyme catalyses (5Z,8Z,11Z,14Z,17Z)-eicosapentaenoate + reduced [NADPH--hemoprotein reductase] + O2 = (17R,18S)-epoxy-(5Z,8Z,11Z,14Z)-eicosatetraenoate + oxidized [NADPH--hemoprotein reductase] + H2O + H(+). It catalyses the reaction (4Z,7Z,10Z,13Z,16Z,19Z)-docosahexaenoate + reduced [NADPH--hemoprotein reductase] + O2 = (19R,20S)-epoxy-(4Z,7Z,10Z,13Z,16Z)-docosapentaenoate + oxidized [NADPH--hemoprotein reductase] + H2O + H(+). It carries out the reaction (5S)-hydroperoxy-(6E,8Z,11Z,14Z)-eicosatetraenoate = 5-oxo-(6E,8Z,11Z,14Z)-eicosatetraenoate + H2O. The catalysed reaction is (12S)-hydroperoxy-(5Z,8Z,10E,14Z)-eicosatetraenoate = 12-oxo-(5Z,8Z,10E,14Z)-eicosatetraenoate + H2O. The enzyme catalyses (15S)-hydroperoxy-(5Z,8Z,11Z,13E)-eicosatetraenoate = 15-oxo-(5Z,8Z,11Z,13E)-eicosatetraenoate + H2O. It catalyses the reaction (13S)-hydroperoxy-(9Z,11E)-octadecadienoate = 13-oxo-(9Z,11E)-octadecadienoate + H2O. It carries out the reaction (5Z,8Z,11Z,14Z)-eicosatetraenoate + reduced [NADPH--hemoprotein reductase] + O2 = 13-hydroxy-(5Z,8Z,11Z,14Z)-eicosatetraenoate + oxidized [NADPH--hemoprotein reductase] + H2O + H(+). The catalysed reaction is (5Z,8Z,11Z,14Z)-eicosatetraenoate + reduced [NADPH--hemoprotein reductase] + O2 = 19-hydroxy-(5Z,8Z,11Z,14Z)-eicosatetraenoate + oxidized [NADPH--hemoprotein reductase] + H2O + H(+). The enzyme catalyses (9Z,12Z)-octadecadienoate + reduced [NADPH--hemoprotein reductase] + O2 = 11-hydroxy-(9Z,12Z)-octadecadienoate + oxidized [NADPH--hemoprotein reductase] + H2O + H(+). Its pathway is cofactor metabolism; retinol metabolism. It participates in steroid metabolism; cholesterol metabolism. It functions in the pathway lipid metabolism; arachidonate metabolism. Functionally, a cytochrome P450 monooxygenase involved in the metabolism of various endogenous substrates, including fatty acids, steroid hormones and vitamins. Mechanistically, uses molecular oxygen inserting one oxygen atom into a substrate, and reducing the second into a water molecule, with two electrons provided by NADPH via cytochrome P450 reductase (NADPH--hemoprotein reductase). Catalyzes the hydroxylation of carbon-hydrogen bonds. Exhibits high catalytic activity for the formation of hydroxyestrogens from estrone (E1) and 17beta-estradiol (E2), namely 2-hydroxy E1 and E2. Metabolizes cholesterol toward 25-hydroxycholesterol, a physiological regulator of cellular cholesterol homeostasis. May act as a major enzyme for all-trans retinoic acid biosynthesis in the liver. Catalyzes two successive oxidative transformation of all-trans retinol to all-trans retinal and then to the active form all-trans retinoic acid. Primarily catalyzes stereoselective epoxidation of the last double bond of polyunsaturated fatty acids (PUFA), displaying a strong preference for the (R,S) stereoisomer. Catalyzes bisallylic hydroxylation and omega-1 hydroxylation of PUFA. May also participate in eicosanoids metabolism by converting hydroperoxide species into oxo metabolites (lipoxygenase-like reaction, NADPH-independent). Plays a role in the oxidative metabolism of xenobiotics. Catalyzes the N-hydroxylation of heterocyclic amines and the O-deethylation of phenacetin. Metabolizes caffeine via N3-demethylation. This is Cytochrome P450 1A2 (CYP1A2) from Cavia porcellus (Guinea pig).